Here is a 335-residue protein sequence, read N- to C-terminus: Deoxyhypusine hydroxylase (335 aa).

HEAT-like PBS-type repeat units lie at residues 71-97 (LKHE…VAKD), 104-130 (CRHE…LRDN), 200-233 (LRYR…GLKD), 238-264 (FRHE…ALSN), and 271-298 (VRHE…FLND). Residues His-73, Glu-74, His-106, and Glu-107 each coordinate Fe cation. Fe cation contacts are provided by His-240, Glu-241, His-273, and Glu-274.

The protein belongs to the deoxyhypusine hydroxylase family. It depends on Fe(2+) as a cofactor.

The protein localises to the cytoplasm. It is found in the nucleus. It carries out the reaction [eIF5A protein]-deoxyhypusine + AH2 + O2 = [eIF5A protein]-hypusine + A + H2O. It participates in protein modification; eIF5A hypusination. Catalyzes the hydroxylation of the N(6)-(4-aminobutyl)-L-lysine intermediate to form hypusine, an essential post-translational modification only found in mature eIF-5A factor. The chain is Deoxyhypusine hydroxylase (lia1) from Neosartorya fischeri (strain ATCC 1020 / DSM 3700 / CBS 544.65 / FGSC A1164 / JCM 1740 / NRRL 181 / WB 181) (Aspergillus fischerianus).